Here is a 317-residue protein sequence, read N- to C-terminus: SURF1-like protein (317 aa).

A run of 2 helical transmembrane segments spans residues 78–98 and 293–313; these read GSILMLGLPAFAFSLGVWQIY and HMNYLTTWFTLTLVTMLMWIH.

Belongs to the SURF1 family.

It is found in the mitochondrion inner membrane. Probably involved in the biogenesis of the COX complex. The chain is SURF1-like protein (sft-1) from Caenorhabditis briggsae.